A 109-amino-acid polypeptide reads, in one-letter code: MLEPFQILSICSFILSALHFMGWTIGHLNQIKRGVNLKIRIRNPNKETINREVSILRHSYQKEIQAKETIKEVLSDNMERLSDHIVIEGLSAEEIIKMGETVLEVEELH.

The Virion surface segment spans residues 1 to 4; sequence MLEP. The helical; Signal-anchor for type III membrane protein transmembrane segment at 5 to 27 threads the bilayer; the sequence is FQILSICSFILSALHFMGWTIGH. Topologically, residues 28–109 are intravirion; the sequence is LNQIKRGVNL…ETVLEVEELH (82 aa). The stretch at 59 to 83 forms a coiled coil; it reads SYQKEIQAKETIKEVLSDNMERLSD.

As to quaternary structure, homotetramer. Phosphorylated by host.

Its subcellular location is the virion membrane. It is found in the host cell membrane. Functionally, forms presumably a highly low-pH gated proton-selective channel. Trp-23 may function as a minimalistic gate that opens and closes the pore. When the environmental pH is lower than a threshold, the BM2 channel would be activated and selectively transport protons across the membrane from the extracellular side to the cytoplasmic side. Crucial for the uncoating process. When the virion is internalized into the endosome, the channel acidifies the virion's interior, promoting the dissociation of matrix protein 1 (M1) from the ribonucleoprotein (RNP) thus allowing the transport of the RNP from the virion into the cell's nucleus. Also plays a role in viral proteins secretory pathway. Elevates the intravesicular pH of normally acidic compartments, such as trans-Golgi network, preventing newly formed hemagglutinin from premature switching to the fusion-active conformation. Plays a crucial role in virion assembly. Expressed in the late phase of the infection. In Homo sapiens (Human), this protein is Matrix protein 2 (M).